We begin with the raw amino-acid sequence, 66 residues long: Phylloseptin-S4 (66 aa).

A signal peptide spans 1-22 (MAFLKKSLFLVLFLGLVSLSIC). A propeptide spanning residues 23–46 (EEEKRETEEEEHDQEEDDKSEEKR) is cleaved from the precursor. Residues 25-44 (EKRETEEEEHDQEEDDKSEE) are disordered. The span at 30–41 (EEEEHDQEEDDK) shows a compositional bias: acidic residues. The residue at position 65 (Leu-65) is a Leucine amide.

In terms of tissue distribution, expressed by the skin glands.

It localises to the secreted. It is found in the target cell membrane. Functionally, antimicrobial peptide with high activity against Gram-positive bacteria, moderate activity against Gram-negative bacteria, and moderate activity against fungi. Acts by causing bacterial membrane disruption inducing leakage of the intracellular content followed by cell death. It adopts an alpha-helical amphipathic structure in membrane environments. Also shows highly potent antiparasitic activity against Leishmania species. Shows moderate hemolytic activity on human erythrocytes (LC(50)=33 uM). Is also active on human monocytes (IC(50)=23 uM). This Phyllomedusa sauvagei (Sauvage's leaf frog) protein is Phylloseptin-S4.